Reading from the N-terminus, the 331-residue chain is 6-phosphogluconolactonase (331 aa).

K287 carries the post-translational modification N6-acetyllysine.

The protein belongs to the cycloisomerase 2 family.

The enzyme catalyses 6-phospho-D-glucono-1,5-lactone + H2O = 6-phospho-D-gluconate + H(+). It functions in the pathway carbohydrate degradation; pentose phosphate pathway; D-ribulose 5-phosphate from D-glucose 6-phosphate (oxidative stage): step 2/3. In terms of biological role, catalyzes the hydrolysis of 6-phosphogluconolactone to 6-phosphogluconate. The polypeptide is 6-phosphogluconolactonase (Shigella boydii serotype 18 (strain CDC 3083-94 / BS512)).